Consider the following 88-residue polypeptide: MAHKKGASSSSNGRDSEAKRLGVKRFGGQQVNAGEILVRQRGTKFHPGENVGRGGDDTLFALKAGAVEFITKRNRRLVNIVENETVDA.

The tract at residues 1-25 is disordered; that stretch reads MAHKKGASSSSNGRDSEAKRLGVKR.

It belongs to the bacterial ribosomal protein bL27 family.

In Corynebacterium diphtheriae (strain ATCC 700971 / NCTC 13129 / Biotype gravis), this protein is Large ribosomal subunit protein bL27.